The following is a 346-amino-acid chain: Probable choline kinase 3 (346 aa).

Residues R71, Q207, and D224 each contribute to the ATP site.

The protein belongs to the choline/ethanolamine kinase family.

It catalyses the reaction choline + ATP = phosphocholine + ADP + H(+). It participates in phospholipid metabolism; phosphatidylcholine biosynthesis; phosphocholine from choline: step 1/1. Its function is as follows. Involved in phospholipid biosynthesis. Catalyzes the first step in phosphatidylcholine biosynthesis. This chain is Probable choline kinase 3, found in Arabidopsis thaliana (Mouse-ear cress).